A 337-amino-acid chain; its full sequence is MIQKNWQELIKPNKVEFSKHDNPNISSVIVEPLERGFGLTLGNALRRVLLSSLRGAAITAVQIDGVLHEFSSIPGVREDVTDIILNIKEIALRMREEGPKRIVVCKEGPGVLRAGDISTVGDMEILNPDHVICTLDEDAEIRMEFIVNTGKGYVPSDRNCIDDARIGLIPVDSLYSPIRKVSYKVENTREGQVLDYDKLTLTVETNGAVNGEDALAFAARILQDQLALFINFKEPEKPTVEESNSELAFNPALLKKVDELELSVRSANCLKNDNIVYIGDLIQKTESEMLRTPNFGRKSLNEIKEVLACMGLHLGMEVPTWPPENIDDLAKRYEDQY.

The interval 1–233 is alpha N-terminal domain (alpha-NTD); that stretch reads MIQKNWQELI…DQLALFINFK (233 aa). The alpha C-terminal domain (alpha-CTD) stretch occupies residues 249-337; the sequence is FNPALLKKVD…DLAKRYEDQY (89 aa).

It belongs to the RNA polymerase alpha chain family. In terms of assembly, homodimer. The RNAP catalytic core consists of 2 alpha, 1 beta, 1 beta' and 1 omega subunit. When a sigma factor is associated with the core the holoenzyme is formed, which can initiate transcription.

It carries out the reaction RNA(n) + a ribonucleoside 5'-triphosphate = RNA(n+1) + diphosphate. In terms of biological role, DNA-dependent RNA polymerase catalyzes the transcription of DNA into RNA using the four ribonucleoside triphosphates as substrates. This is DNA-directed RNA polymerase subunit alpha from Bartonella henselae (strain ATCC 49882 / DSM 28221 / CCUG 30454 / Houston 1) (Rochalimaea henselae).